Reading from the N-terminus, the 123-residue chain is S-adenosylmethionine decarboxylase proenzyme 2 (123 aa).

Residue serine 65 is the Schiff-base intermediate with substrate; via pyruvic acid of the active site. The residue at position 65 (serine 65) is a Pyruvic acid (Ser); by autocatalysis. Catalysis depends on histidine 70, which acts as the Proton acceptor; for processing activity. Cysteine 85 (proton donor; for catalytic activity) is an active-site residue.

The protein belongs to the prokaryotic AdoMetDC family. Type 1 subfamily. Heterotetramer of two alpha and two beta chains arranged as a dimer of alpha/beta heterodimers. Pyruvate serves as cofactor. Is synthesized initially as an inactive proenzyme. Formation of the active enzyme involves a self-maturation process in which the active site pyruvoyl group is generated from an internal serine residue via an autocatalytic post-translational modification. Two non-identical subunits are generated from the proenzyme in this reaction, and the pyruvate is formed at the N-terminus of the alpha chain, which is derived from the carboxyl end of the proenzyme. The post-translation cleavage follows an unusual pathway, termed non-hydrolytic serinolysis, in which the side chain hydroxyl group of the serine supplies its oxygen atom to form the C-terminus of the beta chain, while the remainder of the serine residue undergoes an oxidative deamination to produce ammonia and the pyruvoyl group blocking the N-terminus of the alpha chain.

The catalysed reaction is S-adenosyl-L-methionine + H(+) = S-adenosyl 3-(methylsulfanyl)propylamine + CO2. It functions in the pathway amine and polyamine biosynthesis; S-adenosylmethioninamine biosynthesis; S-adenosylmethioninamine from S-adenosyl-L-methionine: step 1/1. Functionally, catalyzes the decarboxylation of S-adenosylmethionine to S-adenosylmethioninamine (dcAdoMet), the propylamine donor required for the synthesis of the polyamines spermine and spermidine from the diamine putrescine. The polypeptide is S-adenosylmethionine decarboxylase proenzyme 2 (Bacillus cereus (strain ZK / E33L)).